Consider the following 300-residue polypeptide: Acetylglutamate kinase (300 aa).

Substrate contacts are provided by residues 73–74 (GG), arginine 95, and asparagine 197.

This sequence belongs to the acetylglutamate kinase family. ArgB subfamily.

The protein localises to the cytoplasm. The enzyme catalyses N-acetyl-L-glutamate + ATP = N-acetyl-L-glutamyl 5-phosphate + ADP. The protein operates within amino-acid biosynthesis; L-arginine biosynthesis; N(2)-acetyl-L-ornithine from L-glutamate: step 2/4. Its function is as follows. Catalyzes the ATP-dependent phosphorylation of N-acetyl-L-glutamate. The polypeptide is Acetylglutamate kinase (Polynucleobacter asymbioticus (strain DSM 18221 / CIP 109841 / QLW-P1DMWA-1) (Polynucleobacter necessarius subsp. asymbioticus)).